Here is a 963-residue protein sequence, read N- to C-terminus: Adhesion G protein-coupled receptor D2 (963 aa).

Residues methionine 1–serine 662 are Extracellular-facing. A disordered region spans residues aspartate 18–glycine 38. The region spanning threonine 116–cysteine 325 is the Pentraxin (PTX) domain. A disulfide bond links cysteine 146 and cysteine 212. Residue asparagine 271 is glycosylated (N-linked (GlcNAc...) asparagine). Residues methionine 489–glutamine 649 form the GAIN-B domain. Residues proline 599–glutamine 649 form a GPS region. Cysteine 619 and cysteine 633 are joined by a disulfide. Asparagine 634 is a glycosylation site (N-linked (GlcNAc...) asparagine). Residues phenylalanine 663 to alanine 683 traverse the membrane as a helical segment. The Cytoplasmic segment spans residues glycine 684–threonine 691. A helical membrane pass occupies residues threonine 692–glutamate 712. At tryptophan 713–alanine 720 the chain is on the extracellular side. The chain crosses the membrane as a helical span at residues cysteine 721–valine 741. Over glutamate 742–arginine 762 the chain is Cytoplasmic. A helical transmembrane segment spans residues leucine 763 to leucine 783. At proline 784–asparagine 800 the chain is on the extracellular side. Residues alanine 801–alanine 821 form a helical membrane-spanning segment. Residues arginine 822 to lysine 857 lie on the Cytoplasmic side of the membrane. A helical transmembrane segment spans residues proline 858–leucine 878. The Extracellular segment spans residues serine 879–proline 880. The helical transmembrane segment at alanine 881 to tyrosine 901 threads the bilayer. Topologically, residues alanine 902 to alanine 963 are cytoplasmic.

It belongs to the G-protein coupled receptor 2 family. Adhesion G-protein coupled receptor (ADGR) subfamily.

Its subcellular location is the membrane. Orphan receptor. In Homo sapiens (Human), this protein is Adhesion G protein-coupled receptor D2 (ADGRD2).